The sequence spans 484 residues: Tyramine receptor 1 (484 aa).

Residues 1–54 are Extracellular-facing; that stretch reads MVRVELQAASLMNGSSAAEEPQDALVGGDACGGRRPPSVLGVRLAVPEWEVAVT. N-linked (GlcNAc...) asparagine glycosylation is present at Asn-13. Residues 55–77 form a helical membrane-spanning segment; that stretch reads AVSLSLIILITIVGNVLVVLSVF. Residues 78–87 are Cytoplasmic-facing; it reads TYKPLRIVQN. The chain crosses the membrane as a helical span at residues 88–109; it reads FFIVSLAVADLTVAVLVMPFNV. The Extracellular portion of the chain corresponds to 110–126; the sequence is AYSLIQRWVFGIVVCKM. Cys-124 and Cys-203 are oxidised to a cystine. The helical transmembrane segment at 127–147 threads the bilayer; sequence WLTCDVLCCTASILNLCAIAL. Residues 148-167 lie on the Cytoplasmic side of the membrane; that stretch reads DRYWAITDPINYAQKRTLRR. Residues 168–190 form a helical membrane-spanning segment; sequence VLAMIAGVWLLSGVISSPPLIGW. The Extracellular segment spans residues 191-215; that stretch reads NDWPMEFNDTTPCQLTEEQGYVIYS. A glycan (N-linked (GlcNAc...) asparagine) is linked at Asn-198. Residues 216 to 237 traverse the membrane as a helical segment; it reads SLGSFFIPLFIMTIVYVEIFIA. Residues 238 to 411 are Cytoplasmic-facing; that stretch reads TKRRLRERAK…LSKERRAART (174 aa). Residues 253–280 are compositionally biased toward polar residues; it reads SAMKQQMAAQAVPSSVPSHDQESVSSET. 2 disordered regions span residues 253–322 and 358–383; these read SAMK…PAMV and TTTA…PTPV. Basic residues predominate over residues 295 to 306; that stretch reads EKRRKTKKKSKK. The span at 361–378 shows a compositional bias: polar residues; it reads AVTDSPRSRTASQKGSTA. A helical membrane pass occupies residues 412–433; the sequence is LGIIMGVFVVCWLPFFLMYVIV. Topologically, residues 434 to 448 are extracellular; the sequence is PFCNPSCKPSPKLVN. Residues 449-470 traverse the membrane as a helical segment; sequence FITWLGYINSALNPIIYTIFNL. Topologically, residues 471–484 are cytoplasmic; it reads DFRRAFKKLLHFKT.

Belongs to the G-protein coupled receptor 1 family. As to expression, present mainly in the central nervous system, especially in the supra- and subesophageal, thoracic and abdominal ganglia. Not found in the distal part of optic lobes.

Its subcellular location is the cell membrane. In terms of biological role, G-protein coupled receptor for tyramine, a known neurotransmitter and neuromodulator and direct precursor of octopamine. The rank order of potency for agonists of this receptor is tyramine &gt; naphazoline &gt; tolazoline &gt; DL-octopamine &gt; dopamine &gt; epinephrine &gt; 5-hydroxytryptamine. For antagonists, the rank order is yohimbine &gt; chlorpromazine &gt; mianserin &gt; phentolamine &gt; metoclopramide. This is Tyramine receptor 1 (GCR1) from Locusta migratoria (Migratory locust).